The following is a 181-amino-acid chain: Large ribosomal subunit protein uL5 (181 aa).

This sequence belongs to the universal ribosomal protein uL5 family. Part of the 50S ribosomal subunit; part of the 5S rRNA/L5/L18/L25 subcomplex. Contacts the 5S rRNA and the P site tRNA. Forms a bridge to the 30S subunit in the 70S ribosome.

Functionally, this is one of the proteins that bind and probably mediate the attachment of the 5S RNA into the large ribosomal subunit, where it forms part of the central protuberance. In the 70S ribosome it contacts protein S13 of the 30S subunit (bridge B1b), connecting the 2 subunits; this bridge is implicated in subunit movement. Contacts the P site tRNA; the 5S rRNA and some of its associated proteins might help stabilize positioning of ribosome-bound tRNAs. The sequence is that of Large ribosomal subunit protein uL5 from Helicobacter acinonychis (strain Sheeba).